Reading from the N-terminus, the 696-residue chain is Polyribonucleotide nucleotidyltransferase (696 aa).

Residues Asp-483 and Asp-489 each contribute to the Mg(2+) site. A KH domain is found at 550–609 (PRITTIWVKVDKIRDVIGSGGKNIRSVTEATGVSIDIDDTGKINIASTNKEACDLAIKMI). Positions 619 to 687 (GKLYMGTVKK…KQGKIKLSRK (69 aa)) constitute an S1 motif domain.

This sequence belongs to the polyribonucleotide nucleotidyltransferase family. Requires Mg(2+) as cofactor.

The protein resides in the cytoplasm. It carries out the reaction RNA(n+1) + phosphate = RNA(n) + a ribonucleoside 5'-diphosphate. In terms of biological role, involved in mRNA degradation. Catalyzes the phosphorolysis of single-stranded polyribonucleotides processively in the 3'- to 5'-direction. In Geobacter sp. (strain M21), this protein is Polyribonucleotide nucleotidyltransferase.